A 475-amino-acid chain; its full sequence is Ribulose bisphosphate carboxylase large chain (475 aa).

Positions 1 to 2 (MS) are excised as a propeptide. N-acetylproline is present on Pro3. The residue at position 14 (Lys14) is an N6,N6,N6-trimethyllysine. Substrate-binding residues include Asn123 and Thr173. The Proton acceptor role is filled by Lys175. Position 177 (Lys177) interacts with substrate. Residues Lys201, Asp203, and Glu204 each contribute to the Mg(2+) site. N6-carboxylysine is present on Lys201. His294 (proton acceptor) is an active-site residue. The substrate site is built by His327 and Ser379.

The protein belongs to the RuBisCO large chain family. Type I subfamily. In terms of assembly, heterohexadecamer of 8 large chains and 8 small chains; disulfide-linked. The disulfide link is formed within the large subunit homodimers. Mg(2+) is required as a cofactor. Post-translationally, the disulfide bond which can form in the large chain dimeric partners within the hexadecamer appears to be associated with oxidative stress and protein turnover.

It is found in the plastid. The protein resides in the chloroplast. The enzyme catalyses 2 (2R)-3-phosphoglycerate + 2 H(+) = D-ribulose 1,5-bisphosphate + CO2 + H2O. It catalyses the reaction D-ribulose 1,5-bisphosphate + O2 = 2-phosphoglycolate + (2R)-3-phosphoglycerate + 2 H(+). In terms of biological role, ruBisCO catalyzes two reactions: the carboxylation of D-ribulose 1,5-bisphosphate, the primary event in carbon dioxide fixation, as well as the oxidative fragmentation of the pentose substrate in the photorespiration process. Both reactions occur simultaneously and in competition at the same active site. In Amaranthus hypochondriacus (Prince-of-Wales feather), this protein is Ribulose bisphosphate carboxylase large chain.